The chain runs to 430 residues: MSSVVVVGTQWGDEGKGKITDFLSKKADVVARYQGGDNAGHTIVFNNETYKLHLIPSGIFYSDKKCVIGNGLVVNPKSLVKELKYLHDRGVSTDNLLISNRAHVILPYHQLQDQLEEEAKGDAKVGTTLKGIGPCYMDKAARIGIRMADLLDKETFAEKLKIVLEQKNRMFTKMYDAEAIAFDDIFEEYYAYGQEFAKYVCDTSVVVNDSLDKGEKVLFEGAQGVLLDLDHGTYPFVTSSNASAGGVASGVGVGPARIDHVVGVCKAYTSRVGDGPFPTELFDEIGHQIREVGREYGTTTGRPRRVGWFDSVVVRHSRRTSGLTDLSLNSIDVLTGIETLKICTSYEFNGKQIDEYPASFRDLEACVPVYEELPGWKEDITHIRKFEDLPINAQNYVKRIADLTGISLVTFSVGPGREQTVVLRDLYEEA.

GTP-binding positions include 12–18 (GDEGKGK) and 40–42 (GHT). D13 serves as the catalytic Proton acceptor. Positions 13 and 40 each coordinate Mg(2+). IMP contacts are provided by residues 13 to 16 (DEGK), 38 to 41 (NAGH), T128, R142, Q223, T238, and R302. Residue H41 is the Proton donor of the active site. Position 298 to 304 (298 to 304 (TTTGRPR)) interacts with substrate. Residues R304, 330 to 332 (SID), and 412 to 414 (SVG) contribute to the GTP site.

It belongs to the adenylosuccinate synthetase family. As to quaternary structure, homodimer. Mg(2+) is required as a cofactor.

The protein resides in the cytoplasm. The enzyme catalyses IMP + L-aspartate + GTP = N(6)-(1,2-dicarboxyethyl)-AMP + GDP + phosphate + 2 H(+). It functions in the pathway purine metabolism; AMP biosynthesis via de novo pathway; AMP from IMP: step 1/2. Functionally, plays an important role in the de novo pathway of purine nucleotide biosynthesis. Catalyzes the first committed step in the biosynthesis of AMP from IMP. In Exiguobacterium sibiricum (strain DSM 17290 / CCUG 55495 / CIP 109462 / JCM 13490 / 255-15), this protein is Adenylosuccinate synthetase.